Reading from the N-terminus, the 611-residue chain is MSVQVVSAAAAAKVPEVELKDLSPSEAEPQLGLSTAAVSAMAPPAGGGDPEAPAPAAERPPAPGPGSGPAAALSPAAGKVPQASAMKRSDPHHQHQRHRDGGEALVSPDGTVTEAPRTVKKQIQFADQKQEFNKRPTKIGRRSLSRSISQSSTDSYSSAASYTDSSDDETSPRDKQQKNSKGNSDFCVKNIKQAEFGRREIEIAEQEMPALMALRKRAQGEKPLAGAKIVGCTHITAQTAVLMETLGALGAQCRWAACNIYSTLNEVAAALAESGFPVFAWKGESEDDFWWCIDRCVNVEGWQPNMILDDGGDLTHWIYKKYPNMFKKIKGIVEESVTGVHRLYQLSKAGKLCVPAMNVNDSVTKQKFDNLYCCRESILDGLKRTTDMMFGGKQVVVCGYGEVGKGCCAALKAMGSIVYVTEIDPICALQACMDGFRLVKLNEVIRQVDIVITCTGNKNVVTREHLDRMKNSCIVCNMGHSNTEIDVASLRTPELTWERVRSQVDHVIWPDGKRIILLAEGRLLNLSCSTVPTFVLSITATTQALALIELYNAPEGRYKQDVYLLPKKMDEYVASLHLPTFDAHLTELTDEQAKYLGLNKNGPFKPNYYRY.

Low complexity-rich tracts occupy residues 1 to 14 (MSVQ…AAKV), 40 to 57 (AMAP…APAA), and 68 to 78 (GPAAALSPAAG). The segment at 1–184 (MSVQVVSAAA…KQQKNSKGNS (184 aa)) is disordered. Ser-2 is subject to N-acetylserine. Positions 2-109 (SVQVVSAAAA…DGGEALVSPD (108 aa)) are LISN domain, inhibits interaction with ITPR1. At Ser-107 the chain carries Phosphoserine. Residues 135 to 144 (RPTKIGRRSL) are compositionally biased toward basic residues. Over residues 145–164 (SRSISQSSTDSYSSAASYTD) the composition is skewed to low complexity. Residues Ser-149, Ser-152, Ser-155, and Ser-158 each carry the phosphoserine modification. The substrate site is built by Thr-236, Asp-310, and Glu-335. 336–338 (SVT) contributes to the NAD(+) binding site. Residues Lys-365 and Asp-369 each contribute to the substrate site. NAD(+)-binding positions include Asn-370, 401 to 406 (GEVGKG), Glu-422, Asn-457, 478 to 479 (MG), and Asn-525.

Belongs to the adenosylhomocysteinase family. In terms of assembly, homotetramer. Forms heteromultimers with AHCYL1 (via the C-terminal region). Interacts with ITPR1; with lower affinity than AHCYL1 and maybe via ITPR1. Interacts with SLC4A4. Interacts with ZCCHC4. The cofactor is NAD(+). In terms of processing, phosphorylated during neuronal differentiation at the LISN domain. As to expression, expressed in parotid and acinar cells (at protein level).

Its subcellular location is the cytoplasm. The protein resides in the microsome. It carries out the reaction S-adenosyl-L-homocysteine + H2O = L-homocysteine + adenosine. It functions in the pathway amino-acid biosynthesis; L-homocysteine biosynthesis; L-homocysteine from S-adenosyl-L-homocysteine: step 1/1. Its function is as follows. May regulate the electrogenic sodium/bicarbonate cotransporter SLC4A4 activity and Mg(2+)-sensitivity. On the contrary of its homolog AHCYL1, does not regulate ITPR1 sensitivity to inositol 1,4,5-trisphosphate. The polypeptide is Adenosylhomocysteinase 3 (Bos taurus (Bovine)).